A 434-amino-acid polypeptide reads, in one-letter code: Galactofuranosyl glycosyltransferase (434 aa).

The Cytoplasmic segment spans residues 1 to 18; it reads MAPPRWHHDRRRMAIFVR. A helical; Signal-anchor for type II membrane protein transmembrane segment spans residues 19–38; that stretch reads VGLYTLLFLMGYVVPLIIFY. Residues asparagine 39, asparagine 100, asparagine 162, and asparagine 388 are each glycosylated (N-linked (GlcNAc...) asparagine). Residues 39–434 are Lumenal-facing; it reads NRSRADTFED…KLLDFPVDPS (396 aa).

This sequence belongs to the glycosyltransferase 2 family.

The protein resides in the endoplasmic reticulum membrane. It participates in glycolipid biosynthesis; glycosylphosphatidylinositol-anchor biosynthesis. In terms of biological role, glycosyltransferase that may be responsible for the addition of galactofuranosyl residues to the nascent lipophosphoglycan (LPG) chain. It could alternatively be involved in the synthesis of the galactofuranosyl donor. In Leishmania donovani, this protein is Galactofuranosyl glycosyltransferase (LPG1).